Consider the following 342-residue polypeptide: Methylthioribose-1-phosphate isomerase (342 aa).

Residues 49–51 (RGA), Arg-86, and Gln-187 each bind substrate. The active-site Proton donor is the Asp-228. 238–239 (NK) provides a ligand contact to substrate.

The protein belongs to the eIF-2B alpha/beta/delta subunits family. MtnA subfamily.

The catalysed reaction is 5-(methylsulfanyl)-alpha-D-ribose 1-phosphate = 5-(methylsulfanyl)-D-ribulose 1-phosphate. It participates in amino-acid biosynthesis; L-methionine biosynthesis via salvage pathway; L-methionine from S-methyl-5-thio-alpha-D-ribose 1-phosphate: step 1/6. In terms of biological role, catalyzes the interconversion of methylthioribose-1-phosphate (MTR-1-P) into methylthioribulose-1-phosphate (MTRu-1-P). This Klebsiella pneumoniae subsp. pneumoniae (strain ATCC 700721 / MGH 78578) protein is Methylthioribose-1-phosphate isomerase.